Here is a 148-residue protein sequence, read N- to C-terminus: Pivalyl-CoA mutase small subunit (148 aa).

The 131-residue stretch at proline 8–glutamate 138 folds into the B12-binding domain. Histidine 21 serves as a coordination point for adenosylcob(III)alamin.

Belongs to the acyl-CoA mutase small subunit family. In terms of assembly, monomer in the absence of the PCM large subunit. Weakly interacts with the PCM large subunit; an alpha(2)beta(2) stoichiometry seems to represent the active state of the enzyme. Adenosylcob(III)alamin serves as cofactor.

It carries out the reaction 3-methylbutanoyl-CoA = 2,2-dimethylpropanoyl-CoA. Functionally, together with Xaut_5043, catalyzes the reversible isomerization between pivalyl-CoA and isovaleryl-CoA, using radical chemistry. Does not exhibit isobutyryl-CoA mutase (ICM) activity. The polypeptide is Pivalyl-CoA mutase small subunit (Xanthobacter autotrophicus (strain ATCC BAA-1158 / Py2)).